A 424-amino-acid polypeptide reads, in one-letter code: Kynureninase (424 aa).

Pyridoxal 5'-phosphate is bound by residues Leu106, Thr107, 134-137 (FPSD), Asp219, His222, and Tyr244. Residue Lys245 is modified to N6-(pyridoxal phosphate)lysine. Trp274 and Asn302 together coordinate pyridoxal 5'-phosphate.

Belongs to the kynureninase family. Homodimer. Requires pyridoxal 5'-phosphate as cofactor.

It catalyses the reaction L-kynurenine + H2O = anthranilate + L-alanine + H(+). The catalysed reaction is 3-hydroxy-L-kynurenine + H2O = 3-hydroxyanthranilate + L-alanine + H(+). The protein operates within amino-acid degradation; L-kynurenine degradation; L-alanine and anthranilate from L-kynurenine: step 1/1. Its pathway is cofactor biosynthesis; NAD(+) biosynthesis; quinolinate from L-kynurenine: step 2/3. Functionally, catalyzes the cleavage of L-kynurenine (L-Kyn) and L-3-hydroxykynurenine (L-3OHKyn) into anthranilic acid (AA) and 3-hydroxyanthranilic acid (3-OHAA), respectively. The chain is Kynureninase from Xanthomonas campestris pv. campestris (strain 8004).